Consider the following 402-residue polypeptide: Acetylornithine aminotransferase (402 aa).

Residues 117–118 (GA) and phenylalanine 143 each bind pyridoxal 5'-phosphate. Arginine 146 provides a ligand contact to N(2)-acetyl-L-ornithine. 231–234 (DEVQ) is a binding site for pyridoxal 5'-phosphate. Lysine 260 bears the N6-(pyridoxal phosphate)lysine mark. Residue threonine 288 participates in N(2)-acetyl-L-ornithine binding. A pyridoxal 5'-phosphate-binding site is contributed by threonine 289.

This sequence belongs to the class-III pyridoxal-phosphate-dependent aminotransferase family. ArgD subfamily. As to quaternary structure, homodimer. Requires pyridoxal 5'-phosphate as cofactor.

Its subcellular location is the cytoplasm. The catalysed reaction is N(2)-acetyl-L-ornithine + 2-oxoglutarate = N-acetyl-L-glutamate 5-semialdehyde + L-glutamate. It functions in the pathway amino-acid biosynthesis; L-arginine biosynthesis; N(2)-acetyl-L-ornithine from L-glutamate: step 4/4. The protein is Acetylornithine aminotransferase of Corynebacterium efficiens (strain DSM 44549 / YS-314 / AJ 12310 / JCM 11189 / NBRC 100395).